The primary structure comprises 59 residues: Large ribosomal subunit protein uL30 (59 aa).

Belongs to the universal ribosomal protein uL30 family. As to quaternary structure, part of the 50S ribosomal subunit.

This chain is Large ribosomal subunit protein uL30, found in Alteromonas mediterranea (strain DSM 17117 / CIP 110805 / LMG 28347 / Deep ecotype).